The sequence spans 461 residues: Transcription factor GTE3, chloroplastic (461 aa).

A compositionally biased stretch (gly residues) spans 1–11 (MASGPIAGGGV). Residues 1-41 (MASGPIAGGGVSKTKHKWSDSGNKSQKRSKPTVANSNSLGL) form a disordered region. The transit peptide at 1-51 (MASGPIAGGGVSKTKHKWSDSGNKSQKRSKPTVANSNSLGLEDNHQMMKIS) directs the protein to the chloroplast. The Bromo domain maps to 114–220 (KGTVQILKSC…NLFEEKWVPL (107 aa)). An NET domain is found at 298-379 (LVEEASANRD…EYKESLSKKK (82 aa)). The span at 376-392 (SKKKEEQGLDSERDAES) shows a compositional bias: basic and acidic residues. A disordered region spans residues 376 to 461 (SKKKEEQGLD…SSGHESDTGN (86 aa)). Residues 393 to 412 (FHNSVHESNTLVTGLESSKV) are compositionally biased toward polar residues. The segment covering 429–451 (GGSSSSNSSSSGSGSGSSGSDSD) has biased composition (low complexity). A compositionally biased stretch (basic and acidic residues) spans 452–461 (SSGHESDTGN).

Interacts with SIZ1 (via PHD domain). In terms of processing, sumoylated by SIZ1. Sumoylation reduces capacity to bind to acetylated histone H3.

It localises to the plastid. The protein resides in the chloroplast. In terms of biological role, probable transcription factor that binds to acetylated histone H3. This chain is Transcription factor GTE3, chloroplastic (GTE3), found in Arabidopsis thaliana (Mouse-ear cress).